The chain runs to 76 residues: Sec-independent protein translocase protein TatA (76 aa).

Residues 1-21 (MGSFSIWHWLIVLAVVLLLFG) traverse the membrane as a helical segment. Positions 43 to 76 (MSDEDAKDDARDSGRTIDAKADETVNDVKKTTKS) are disordered. Residues 50–76 (DDARDSGRTIDAKADETVNDVKKTTKS) are compositionally biased toward basic and acidic residues.

The protein belongs to the TatA/E family. As to quaternary structure, the Tat system comprises two distinct complexes: a TatABC complex, containing multiple copies of TatA, TatB and TatC subunits, and a separate TatA complex, containing only TatA subunits. Substrates initially bind to the TatABC complex, which probably triggers association of the separate TatA complex to form the active translocon.

It localises to the cell inner membrane. Functionally, part of the twin-arginine translocation (Tat) system that transports large folded proteins containing a characteristic twin-arginine motif in their signal peptide across membranes. TatA could form the protein-conducting channel of the Tat system. In Brucella anthropi (strain ATCC 49188 / DSM 6882 / CCUG 24695 / JCM 21032 / LMG 3331 / NBRC 15819 / NCTC 12168 / Alc 37) (Ochrobactrum anthropi), this protein is Sec-independent protein translocase protein TatA.